We begin with the raw amino-acid sequence, 144 residues long: Bacilliredoxin BH1716 (144 aa).

This sequence belongs to the bacilliredoxin family.

The sequence is that of Bacilliredoxin BH1716 from Halalkalibacterium halodurans (strain ATCC BAA-125 / DSM 18197 / FERM 7344 / JCM 9153 / C-125) (Bacillus halodurans).